A 207-amino-acid chain; its full sequence is MISSLRGTVLSASGGAAVIDVGGVGFAVQLTPDHARSLRVGDEAFVHTTLIVREDSLQLFGFSGLEQLQVFELLNGVSGVGPKSAISVLSVLSPDQVADAVAAADDAPFRAVSGIGPKTAKLIVVSLTGKLAACRRPSAPSARRPSAPSSVSDSVLVALVGLGWPEKVAGEAVAEVIAGTAESERDSVQTLLRLTLARLGPANQAAR.

Positions 1-63 are domain I; that stretch reads MISSLRGTVL…EDSLQLFGFS (63 aa). Residues 64–142 form a domain II region; it reads GLEQLQVFEL…ACRRPSAPSA (79 aa). Positions 142-146 are flexible linker; that stretch reads ARRPS. Residues 147–207 form a domain III region; that stretch reads APSSVSDSVL…RLGPANQAAR (61 aa).

This sequence belongs to the RuvA family. As to quaternary structure, homotetramer. Forms an RuvA(8)-RuvB(12)-Holliday junction (HJ) complex. HJ DNA is sandwiched between 2 RuvA tetramers; dsDNA enters through RuvA and exits via RuvB. An RuvB hexamer assembles on each DNA strand where it exits the tetramer. Each RuvB hexamer is contacted by two RuvA subunits (via domain III) on 2 adjacent RuvB subunits; this complex drives branch migration. In the full resolvosome a probable DNA-RuvA(4)-RuvB(12)-RuvC(2) complex forms which resolves the HJ.

It is found in the cytoplasm. Its function is as follows. The RuvA-RuvB-RuvC complex processes Holliday junction (HJ) DNA during genetic recombination and DNA repair, while the RuvA-RuvB complex plays an important role in the rescue of blocked DNA replication forks via replication fork reversal (RFR). RuvA specifically binds to HJ cruciform DNA, conferring on it an open structure. The RuvB hexamer acts as an ATP-dependent pump, pulling dsDNA into and through the RuvAB complex. HJ branch migration allows RuvC to scan DNA until it finds its consensus sequence, where it cleaves and resolves the cruciform DNA. In Leifsonia xyli subsp. xyli (strain CTCB07), this protein is Holliday junction branch migration complex subunit RuvA.